The sequence spans 217 residues: Probable transaldolase (217 aa).

The active-site Schiff-base intermediate with substrate is the K83.

Belongs to the transaldolase family. Type 3B subfamily.

It localises to the cytoplasm. The enzyme catalyses D-sedoheptulose 7-phosphate + D-glyceraldehyde 3-phosphate = D-erythrose 4-phosphate + beta-D-fructose 6-phosphate. It functions in the pathway carbohydrate degradation; pentose phosphate pathway; D-glyceraldehyde 3-phosphate and beta-D-fructose 6-phosphate from D-ribose 5-phosphate and D-xylulose 5-phosphate (non-oxidative stage): step 2/3. Functionally, transaldolase is important for the balance of metabolites in the pentose-phosphate pathway. In Clostridium botulinum (strain Loch Maree / Type A3), this protein is Probable transaldolase.